The chain runs to 106 residues: NADH-quinone oxidoreductase subunit K (106 aa).

3 helical membrane-spanning segments follow: residues 9–29 (LGHY…GIFL), 35–55 (IVML…MVAF), and 70–90 (FILT…VIYF).

This sequence belongs to the complex I subunit 4L family. As to quaternary structure, NDH-1 is composed of 14 different subunits. Subunits NuoA, H, J, K, L, M, N constitute the membrane sector of the complex.

It is found in the cell inner membrane. The enzyme catalyses a quinone + NADH + 5 H(+)(in) = a quinol + NAD(+) + 4 H(+)(out). Functionally, NDH-1 shuttles electrons from NADH, via FMN and iron-sulfur (Fe-S) centers, to quinones in the respiratory chain. The immediate electron acceptor for the enzyme in this species is believed to be ubiquinone. Couples the redox reaction to proton translocation (for every two electrons transferred, four hydrogen ions are translocated across the cytoplasmic membrane), and thus conserves the redox energy in a proton gradient. This is NADH-quinone oxidoreductase subunit K from Granulibacter bethesdensis (strain ATCC BAA-1260 / CGDNIH1).